The following is a 47-amino-acid chain: PhoP/PhoQ regulator MgrB (47 aa).

Residues 6–26 (WLVLIVVVLACLVLWAQVINI) form a helical membrane-spanning segment.

Belongs to the MgrB family. In terms of assembly, may form homooligomers. Probably interacts with the periplasmic domain of PhoQ.

Its subcellular location is the cell inner membrane. Functionally, phoP-regulated transcription is redox-sensitive, being activated when the periplasm becomes more reducing. MgrB acts between DsbA/DsbB and PhoP/PhoQ in this pathway. Represses PhoP/PhoQ signaling, possibly by binding to the periplasmic domain of PhoQ, altering its activity and that of downstream effector PhoP. This chain is PhoP/PhoQ regulator MgrB, found in Escherichia fergusonii (strain ATCC 35469 / DSM 13698 / CCUG 18766 / IAM 14443 / JCM 21226 / LMG 7866 / NBRC 102419 / NCTC 12128 / CDC 0568-73).